We begin with the raw amino-acid sequence, 1690 residues long: Collagen alpha-4(IV) chain (1690 aa).

A signal peptide spans 1–38; sequence MWSLHIVLMRCSFRLTKSLATGPWSLILILFSVQYVYG. The segment at 39 to 64 is 7S domain; it reads SGKKYIGPCGGRDCSVCHCVPEKGSR. Disordered stretches follow at residues 61–173 and 187–258; these read KGSR…GEKG and GDRG…GPTL. Residues 65–1459 form a triple-helical region region; that stretch reads GPPGPPGPQG…IGDPGPKGFG (1395 aa). Positions 66–75 are enriched in pro residues; the sequence is PPGPPGPQGP. Residues 76–88 are compositionally biased toward low complexity; it reads IGPLGAPGPIGLS. The short motif at 94 to 96 is the Cell attachment site element; that stretch reads RGD. N-linked (GlcNAc...) asparagine glycosylation occurs at asparagine 142. Positions 145–147 match the Cell attachment site motif; that stretch reads RGD. Gly residues predominate over residues 149–164; sequence GFPGGRGALGPGGPLG. The Cell attachment site signature appears at 189–191; the sequence is RGD. Gly residues predominate over residues 199 to 208; sequence GSWGAGGPAG. A Cell attachment site motif is present at residues 310–312; that stretch reads RGD. 3 disordered regions span residues 369 to 390, 405 to 451, and 469 to 1457; these read PGDP…PGPP, GPPG…GLQG, and GIKG…GPKG. Over residues 412-434 the composition is skewed to low complexity; it reads FPGLPGLPGEAGIPGRPDSAPGK. Composition is skewed to pro residues over residues 498 to 507 and 529 to 540; these read PMGPPGPPGL and PGPPGAEGPPGL. Residues 586-607 show a composition bias toward basic and acidic residues; it reads HGRDGHAGEKGDPGPPGDHEDA. Residues 644-655 show a composition bias toward low complexity; sequence PGVPGHPGVRGP. The N-linked (GlcNAc...) asparagine glycan is linked to asparagine 669. Pro residues predominate over residues 681-690; sequence FDGPPGPKGF. Short sequence motifs (cell attachment site) lie at residues 724–726 and 785–787; these read RGD. Residues 849 to 858 are compositionally biased toward gly residues; sequence GAPGGKGQPG. Low complexity-rich tracts occupy residues 866 to 880 and 907 to 917; these read AGMK…RPGA and PRGLPGFPGFP. The short motif at 989–991 is the Cell attachment site element; sequence RGD. A compositionally biased stretch (pro residues) spans 1023–1032; that stretch reads PGPPGPPGPP. Low complexity predominate over residues 1108–1117; the sequence is PGIQGPRGSP. Pro residues predominate over residues 1119 to 1131; that stretch reads RPGPPGSSGPPGC. The Cell attachment site motif lies at 1212–1214; the sequence is RGD. Composition is skewed to pro residues over residues 1220–1243, 1256–1280, 1297–1309, 1338–1353, and 1443–1452; these read ISPP…PPGP, DPGP…PPGL, PGPP…PGPP, FPGP…PPGR, and GPGPPGPIGD. In terms of domain architecture, Collagen IV NC1 spans 1465–1690; it reads GFLLVLHSQT…SRCQVCVKYS (226 aa). Cystine bridges form between cysteine 1480-cysteine 1569, cysteine 1513-cysteine 1566, cysteine 1525-cysteine 1531, cysteine 1588-cysteine 1686, cysteine 1622-cysteine 1683, and cysteine 1634-cysteine 1641.

It belongs to the type IV collagen family. There are six type IV collagen isoforms, alpha 1(IV)-alpha 6(IV), each of which can form a triple helix structure with 2 other chains to generate type IV collagen network. The alpha 3(IV) chain forms a triple helical protomer with alpha 4(IV) and alpha 5(IV); this triple helical structure dimerizes through NC1-NC1 domain interactions such that the alpha 3(IV), alpha 4(IV) and alpha 5(IV) chains of one protomer connect with the alpha 5(IV), alpha 4(IV) and alpha 3(IV) chains of the opposite protomer, respectively. Associates with LAMB2 at the neuromuscular junction and in GBM. Post-translationally, prolines at the third position of the tripeptide repeating unit (G-X-Y) are hydroxylated in some or all of the chains. Type IV collagens contain numerous cysteine residues which are involved in inter- and intramolecular disulfide bonding. 12 of these, located in the NC1 domain, are conserved in all known type IV collagens. In terms of processing, the trimeric structure of the NC1 domains is stabilized by covalent bonds between Lys and Met residues. In terms of tissue distribution, expressed in Bruch's membrane, outer plexiform layer, inner nuclear layer, inner plexiform layer, ganglion cell layer, inner limiting membrane and around the blood vessels of the retina (at protein level). Alpha 3 and alpha 4 type IV collagens are colocalized and present in kidney, eye, basement membranes of lens capsule, cochlea, lung, skeletal muscle, aorta, synaptic fibers, fetal kidney and fetal lung. PubMed:8083201 reports similar levels of expression of alpha 3 and alpha 4 type IV collagens in kidney, but PubMed:7523402 reports that in kidney levels of alpha 3 type IV collagen are significantly lower than those of alpha 4 type IV collagen. Highest levels of expression of alpha 4 type IV collagen are detected in kidney, calvaria, neuroretina and cardiac muscle. Lower levels of expression are observed in brain, lung and thymus, and no expression is detected in choroid plexus, liver, adrenal, pancreas, ileum or skin.

The protein resides in the secreted. It is found in the extracellular space. It localises to the extracellular matrix. Its subcellular location is the basement membrane. In terms of biological role, type IV collagen is the major structural component of glomerular basement membranes (GBM), forming a 'chicken-wire' meshwork together with laminins, proteoglycans and entactin/nidogen. The sequence is that of Collagen alpha-4(IV) chain (COL4A4) from Homo sapiens (Human).